We begin with the raw amino-acid sequence, 610 residues long: UvrABC system protein C (610 aa).

Residues 16 to 94 form the GIY-YIG domain; that stretch reads SQPGVYRMYD…IKLYQPRYNV (79 aa). Residues 204-239 form the UVR domain; it reads QQVLTQLITRMEEASQQLHFEDAARIRDQIQAVRRV.

This sequence belongs to the UvrC family. In terms of assembly, interacts with UvrB in an incision complex.

The protein resides in the cytoplasm. In terms of biological role, the UvrABC repair system catalyzes the recognition and processing of DNA lesions. UvrC both incises the 5' and 3' sides of the lesion. The N-terminal half is responsible for the 3' incision and the C-terminal half is responsible for the 5' incision. The sequence is that of UvrABC system protein C from Yersinia pseudotuberculosis serotype I (strain IP32953).